The chain runs to 166 residues: MFKKLFGKAKEVDKNIKIYAPLTGEYVKIEDIPDPVFAQKMMGEGFGINPTEGEVVSPIEGKVDNVFPTKHAVGLKAENGLELLVHIGLDTVQLDGKGFEVLVESGDDIKIGDPLIRFDLEYINNNAKSIISPIIITNSDQTESIHIEDVQAVVKGETQVIDVTVS.

The region spanning 34–138 (DPVFAQKMMG…SIISPIIITN (105 aa)) is the PTS EIIA type-1 domain. Zn(2+) is bound by residues His-71 and His-86. His-86 (tele-phosphohistidine intermediate; for EIIA activity) is an active-site residue. Residue His-86 is modified to Phosphohistidine; by HPr.

Heterodimer with glycerol kinase (glpk). Requires Zn(2+) as cofactor.

Its subcellular location is the cytoplasm. Its function is as follows. The phosphoenolpyruvate-dependent sugar phosphotransferase system (sugar PTS), a major carbohydrate active transport system, catalyzes the phosphorylation of incoming sugar substrates concomitantly with their translocation across the cell membrane. The enzyme II complex composed of PtsG and Crr is involved in glucose transport. This chain is PTS system glucose-specific EIIA component (crr), found in Staphylococcus epidermidis (strain ATCC 35984 / DSM 28319 / BCRC 17069 / CCUG 31568 / BM 3577 / RP62A).